The primary structure comprises 423 residues: Lipase member M (423 aa).

The signal sequence occupies residues 1-33; it reads MLETLSRQWIVSHRMEMWLLILVAYMFQRNVNS. N-linked (GlcNAc...) asparagine glycosylation occurs at asparagine 48. The AB hydrolase-1 domain maps to 92–392; it reads PVVLLQHGLV…EWAHVDFIWG (301 aa). The active-site Nucleophile is the serine 186. Residues cysteine 260 and cysteine 269 are joined by a disulfide bond. Catalysis depends on charge relay system residues aspartate 357 and histidine 386.

This sequence belongs to the AB hydrolase superfamily. Lipase family. Exclusively expressed in the epidermis within the granular keratinocytes.

It localises to the secreted. Plays a highly specific role in the last step of keratinocyte differentiation. May have an essential function in lipid metabolism of the most differentiated epidermal layers. In Homo sapiens (Human), this protein is Lipase member M (LIPM).